Reading from the N-terminus, the 552-residue chain is Hyaluronan synthase 2 (552 aa).

At 1 to 11 (MHCERFLCILR) the chain is on the cytoplasmic side. A helical transmembrane segment spans residues 12 to 32 (IIGTTLFGVSLLLGITAAYIV). Residues 33-45 (GYQFIQTDNYYFS) lie on the Extracellular side of the membrane. A helical transmembrane segment spans residues 46 to 66 (FGLYGAFLASHLIIQSLFAFL). Residues 67-374 (EHRKMKKSLE…NAMWFHKHHL (308 aa)) lie on the Cytoplasmic side of the membrane. Threonine 110 is subject to Phosphothreonine. Residue lysine 190 forms a Glycyl lysine isopeptide (Lys-Gly) (interchain with G-Cter in ubiquitin) linkage. A glycan (O-linked (GlcNAc) serine) is linked at serine 221. Threonine 328 carries the post-translational modification Phosphothreonine. A helical membrane pass occupies residues 375–395 (WMTYEAVITGFFPFFLIATVI). Residues 396-402 (QLFYRGK) lie on the Extracellular side of the membrane. Residues 403-423 (IWNILLFLLTVQLVGLIKSSF) traverse the membrane as a helical segment. Residues 424–429 (ASCLRG) lie on the Cytoplasmic side of the membrane. The helical transmembrane segment at 430-450 (NIVMVFMSLYSVLYMSSLLPA) threads the bilayer. Over 451-475 (KMFAIATINKAGWGTSGRKTIVVNF) the chain is Extracellular. A helical transmembrane segment spans residues 476–496 (IGLIPVSVWFTILLGGVIFTI). At 497–510 (YKESKKPFSESKQT) the chain is on the cytoplasmic side. Residues 511 to 531 (VLIVGTLLYACYWVMLLTLYV) traverse the membrane as a helical segment. At 532-552 (VLINKCGRRKKGQQYDMVLDV) the chain is on the extracellular side.

It belongs to the NodC/HAS family. Homodimer; dimerization promotes enzymatic activity. Forms heterodimer with HAS3. Forms heterodimer with HAS1. It depends on Mg(2+) as a cofactor. Phosphorylation at Thr-328 is essential for hyaluronan synthase activity. Post-translationally, O-GlcNAcylation at Ser-221 increases the stability of HAS2 and plasma membrane localization. In terms of processing, ubiquitination at Lys-190; this ubiquitination is essential for hyaluronan synthase activity and homo- or hetero-oligomerization. Can also be poly-ubiquitinated. Deubiquitinated by USP17L22/USP17 and USP4. USP17L22/USP17 efficiently removes 'Lys-63'- and 'Lys-48'-linked polyubiquitin chains, whereas USP4 preferentially removes monoubiquitination and, partially, both 'Lys-63'- and 'Lys-48'-linked polyubiquitin chain. Overexpressed in skin fibroblasts.

The protein localises to the cell membrane. It localises to the endoplasmic reticulum membrane. Its subcellular location is the vesicle. The protein resides in the golgi apparatus membrane. It is found in the lysosome. The enzyme catalyses [hyaluronan](n) + UDP-N-acetyl-alpha-D-glucosamine = N-acetyl-beta-D-glucosaminyl-(1-&gt;4)-[hyaluronan](n) + UDP + H(+). It catalyses the reaction N-acetyl-beta-D-glucosaminyl-(1-&gt;4)-[hyaluronan](n) + UDP-alpha-D-glucuronate = [hyaluronan](n+1) + UDP + H(+). It functions in the pathway glycan biosynthesis; hyaluronan biosynthesis. Its function is as follows. Catalyzes the addition of GlcNAc or GlcUA monosaccharides to the nascent hyaluronan polymer. Therefore, it is essential to hyaluronan synthesis a major component of most extracellular matrices that has a structural role in tissues architectures and regulates cell adhesion, migration and differentiation. This is one of three isoenzymes responsible for cellular hyaluronan synthesis and it is particularly responsible for the synthesis of high molecular mass hyaluronan. This chain is Hyaluronan synthase 2 (Has2), found in Heterocephalus glaber (Naked mole rat).